Consider the following 138-residue polypeptide: Oleosin G (138 aa).

3 helical membrane passes run 14–34, 48–68, and 69–89; these read ILGF…TGLT, VLIF…VAVA, and GFLS…WLYN. The Proline-knot signature appears at 47–58; the sequence is PVLIFFSPILIP.

It belongs to the oleosin family. In terms of tissue distribution, expressed in megagametophytes (at protein level).

The protein localises to the lipid droplet. The protein resides in the membrane. This Pinus massoniana (Chinese red pine) protein is Oleosin G.